The chain runs to 231 residues: uncharacterized protein (231 aa).

The signal sequence occupies residues 1-19 (MKFKFLLTPLLSSVLFLSA). Residue cysteine 20 is the site of N-palmitoyl cysteine attachment. The S-diacylglycerol cysteine moiety is linked to residue cysteine 20.

The protein belongs to the MG439/MG440 family.

It is found in the cell membrane. This is an uncharacterized protein from Mycoplasma pneumoniae (strain ATCC 29342 / M129 / Subtype 1) (Mycoplasmoides pneumoniae).